We begin with the raw amino-acid sequence, 493 residues long: Stage V sporulation protein AF (493 aa).

5 helical membrane passes run 296 to 316 (FFGI…VLQP), 334 to 354 (IPII…RMAA), 363 to 383 (TAMG…VGLF), 387 to 407 (VILY…YELS), and 418 to 438 (MILV…VLII).

Belongs to the GerABKA family.

Its subcellular location is the cell membrane. This chain is Stage V sporulation protein AF (spoVAF), found in Bacillus subtilis (strain 168).